A 293-amino-acid polypeptide reads, in one-letter code: 33 kDa chaperonin (293 aa).

2 disulfide bridges follow: Cys237–Cys239 and Cys271–Cys274.

It belongs to the HSP33 family. In terms of processing, under oxidizing conditions two disulfide bonds are formed involving the reactive cysteines. Under reducing conditions zinc is bound to the reactive cysteines and the protein is inactive.

The protein localises to the cytoplasm. In terms of biological role, redox regulated molecular chaperone. Protects both thermally unfolding and oxidatively damaged proteins from irreversible aggregation. Plays an important role in the bacterial defense system toward oxidative stress. The sequence is that of 33 kDa chaperonin from Haemophilus influenzae (strain PittGG).